The sequence spans 272 residues: Small ribosomal subunit protein mS23 (272 aa).

The segment at 236–272 (AGATGGAKEESDPAILPELEVAESTSESAQPAEIRTG) is disordered.

The protein belongs to the mitochondrion-specific ribosomal protein mS23 family. Component of the mitochondrial small ribosomal subunit.

Its subcellular location is the mitochondrion. This Coccidioides immitis (strain RS) (Valley fever fungus) protein is Small ribosomal subunit protein mS23 (RSM25).